The chain runs to 354 residues: Histidinol-phosphate aminotransferase (354 aa).

Position 210 is an N6-(pyridoxal phosphate)lysine (lysine 210).

The protein belongs to the class-II pyridoxal-phosphate-dependent aminotransferase family. Histidinol-phosphate aminotransferase subfamily. As to quaternary structure, homodimer. Requires pyridoxal 5'-phosphate as cofactor.

It carries out the reaction L-histidinol phosphate + 2-oxoglutarate = 3-(imidazol-4-yl)-2-oxopropyl phosphate + L-glutamate. Its pathway is amino-acid biosynthesis; L-histidine biosynthesis; L-histidine from 5-phospho-alpha-D-ribose 1-diphosphate: step 7/9. The chain is Histidinol-phosphate aminotransferase from Clostridium botulinum (strain Okra / Type B1).